The primary structure comprises 221 residues: ATP-dependent dethiobiotin synthetase BioD (221 aa).

11–16 contacts ATP; the sequence is GVGKTY. Position 15 (threonine 15) interacts with Mg(2+). Residue lysine 36 is part of the active site. Threonine 40 is a substrate binding site. Residues aspartate 48 and 107–110 contribute to the ATP site; that span reads EGAG. Residues aspartate 48 and glutamate 107 each coordinate Mg(2+).

Belongs to the dethiobiotin synthetase family. As to quaternary structure, homodimer. Mg(2+) is required as a cofactor.

It is found in the cytoplasm. The enzyme catalyses (7R,8S)-7,8-diammoniononanoate + CO2 + ATP = (4R,5S)-dethiobiotin + ADP + phosphate + 3 H(+). It participates in cofactor biosynthesis; biotin biosynthesis; biotin from 7,8-diaminononanoate: step 1/2. Functionally, catalyzes a mechanistically unusual reaction, the ATP-dependent insertion of CO2 between the N7 and N8 nitrogen atoms of 7,8-diaminopelargonic acid (DAPA, also called 7,8-diammoniononanoate) to form a ureido ring. The sequence is that of ATP-dependent dethiobiotin synthetase BioD from Hydrogenobaculum sp. (strain Y04AAS1).